Reading from the N-terminus, the 587-residue chain is Trans-activating transcriptional regulatory protein (587 aa).

The protein belongs to the nucleopolyhedrovirus IE-1 protein family.

Functionally, regulatory transcriptional protein, which trans-activates gene expression from early baculovirus promoters. Can also trans-activate its own promoter, suggesting that it is autoregulated during normal infection of insect cells. In Bombyx mori nuclear polyhedrosis virus (BmNPV), this protein is Trans-activating transcriptional regulatory protein (IE1).